A 294-amino-acid chain; its full sequence is ATP synthase gamma chain (294 aa).

This sequence belongs to the ATPase gamma chain family. In terms of assembly, F-type ATPases have 2 components, CF(1) - the catalytic core - and CF(0) - the membrane proton channel. CF(1) has five subunits: alpha(3), beta(3), gamma(1), delta(1), epsilon(1). CF(0) has three main subunits: a, b and c.

The protein resides in the cell inner membrane. Functionally, produces ATP from ADP in the presence of a proton gradient across the membrane. The gamma chain is believed to be important in regulating ATPase activity and the flow of protons through the CF(0) complex. The sequence is that of ATP synthase gamma chain from Paraburkholderia phytofirmans (strain DSM 17436 / LMG 22146 / PsJN) (Burkholderia phytofirmans).